The primary structure comprises 98 residues: Large ribosomal subunit protein eL21 (98 aa).

The protein belongs to the eukaryotic ribosomal protein eL21 family.

This chain is Large ribosomal subunit protein eL21, found in Korarchaeum cryptofilum (strain OPF8).